The following is a 400-amino-acid chain: Acetate kinase (400 aa).

Position 10 (Asn10) interacts with Mg(2+). Lys17 provides a ligand contact to ATP. Arg89 contributes to the substrate binding site. Asp148 (proton donor/acceptor) is an active-site residue. ATP is bound by residues 208–212 (HLGNG), 283–285 (DCR), and 331–335 (GIGEN). Glu385 lines the Mg(2+) pocket.

The protein belongs to the acetokinase family. Homodimer. Mg(2+) serves as cofactor. Requires Mn(2+) as cofactor.

The protein localises to the cytoplasm. It carries out the reaction acetate + ATP = acetyl phosphate + ADP. It participates in metabolic intermediate biosynthesis; acetyl-CoA biosynthesis; acetyl-CoA from acetate: step 1/2. Its function is as follows. Catalyzes the formation of acetyl phosphate from acetate and ATP. Can also catalyze the reverse reaction. The sequence is that of Acetate kinase from Haemophilus ducreyi (strain 35000HP / ATCC 700724).